We begin with the raw amino-acid sequence, 498 residues long: Delta(14)-sterol reductase erg24A (498 aa).

The next 4 membrane-spanning stretches (helical) occupy residues 30–50 (LGAFVFIFGLSTLIYCLTFLC), 91–111 (VTVWVLSYYVLSLVLYVFLPG), 136–156 (ILILGGLALGTYMHGADFVVW), and 163–183 (YVQIITANLIICVVLAIFVYA). A glycan (N-linked (GlcNAc...) asparagine) is linked at Asn257. A run of 3 helical transmembrane segments spans residues 275–295 (IVLSTVFQTFYVLDALYMEPA), 302–322 (VIMDGFGYMLSFGHLVWVPFI), and 339–359 (LREILLILAVTGAGYAIFRGA). NADP(+) contacts are provided by residues Lys363, Arg367, Trp395, and 402-403 (NY). N-linked (GlcNAc...) asparagine glycosylation is present at Asn429. The chain crosses the membrane as a helical span at residues 444-464 (VRGWGMIFTYFFLVYFGALLI). NADP(+) contacts are provided by residues Asp470, 474–478 (CKSKY), and Tyr485.

This sequence belongs to the ERG4/ERG24 family.

Its subcellular location is the endoplasmic reticulum membrane. Its pathway is steroid metabolism; ergosterol biosynthesis. Functionally, delta(14)-sterol reductase; part of the third module of ergosterol biosynthesis pathway that includes the late steps of the pathway. Catalyzes the reduction of the C14=C15 double bond within 4,4,24-trimethyl ergosta-8,14,24(28)-trienolto produce 4,4-dimethylfecosterol. The third module or late pathway involves the ergosterol synthesis itself through consecutive reactions that mainly occur in the endoplasmic reticulum (ER) membrane. Firstly, the squalene synthase erg9 catalyzes the condensation of 2 farnesyl pyrophosphate moieties to form squalene, which is the precursor of all steroids. Squalene synthase is crucial for balancing the incorporation of farnesyl diphosphate (FPP) into sterol and nonsterol isoprene synthesis. Secondly, squalene is converted into lanosterol by the consecutive action of the squalene epoxidase erg1 and the lanosterol synthase erg7. Then, the delta(24)-sterol C-methyltransferase erg6 methylates lanosterol at C-24 to produce eburicol. Eburicol is the substrate of the sterol 14-alpha demethylase encoded by cyp51A and cyp51B, to yield 4,4,24-trimethyl ergosta-8,14,24(28)-trienol. The C-14 reductase erg24 then reduces the C14=C15 double bond which leads to 4,4-dimethylfecosterol. A sequence of further demethylations at C-4, involving the C-4 demethylation complex containing the C-4 methylsterol oxidases erg25A or erg25B, the sterol-4-alpha-carboxylate 3-dehydrogenase erg26 and the 3-keto-steroid reductase erg27, leads to the production of fecosterol via 4-methylfecosterol. The C-8 sterol isomerase erg2 then catalyzes the reaction which results in unsaturation at C-7 in the B ring of sterols and thus converts fecosterol to episterol. The sterol-C5-desaturase erg3B then catalyzes the introduction of a C-5 double bond in the B ring to produce 5-dehydroepisterol. The 2 other sterol-C5-desaturases, erg3A and erg3C, seem to be less important in ergosterol biosynthesis. The C-22 sterol desaturase erg5 further converts 5-dehydroepisterol into ergosta-5,7,22,24(28)-tetraen-3beta-ol by forming the C-22(23) double bond in the sterol side chain. Finally, ergosta-5,7,22,24(28)-tetraen-3beta-ol is substrate of the C-24(28) sterol reductases erg4A and erg4B to produce ergosterol. Possible alternative sterol biosynthetic pathways might exist from fecosterol to ergosterol, depending on the activities of the erg3 isoforms. This is Delta(14)-sterol reductase erg24A from Aspergillus fumigatus (strain ATCC MYA-4609 / CBS 101355 / FGSC A1100 / Af293) (Neosartorya fumigata).